The chain runs to 358 residues: MESKAFNKPKVELHVHLDGSIKPETIIHFAKKRQIKLPADTVEGLLEHVSYKEPLSLTEFLSKFNHYMPAIAGDREAIKRIAYEFVEMKAKEGVIYVEVRYSPHFLANSKVEPIPWGQKEGDITPDEVVDLVNQGLRKGEKAFNIKARSILCCMRHMPSWSTEVVELCKKYQNDTVVAIDLAGDESLNCESYPGHRKAYEEAVKCGIHRTVHAGEVGPSSVVKEAVEVLKAERIGHGYHTTEDPNLYKELLEKNMHFEVCPWSSYLTGACHPDFTKHPATQFRKDKANYSLNTDDPLIFGSTLDVDYSIAAKHMGFTEEEFKRVNINAAKSSFLPESEKKELLYKLYEAYGMILSTGL.

Zn(2+) is bound by residues His-14 and His-16. Substrate contacts are provided by His-16, Asp-18, and Gly-183. His-212 is a binding site for Zn(2+). Catalysis depends on Glu-215, which acts as the Proton donor. Asp-294 serves as a coordination point for Zn(2+). Substrate is bound at residue Asp-295.

This sequence belongs to the metallo-dependent hydrolases superfamily. Adenosine and AMP deaminases family. Requires Zn(2+) as cofactor.

The protein localises to the cell membrane. It localises to the cell junction. The protein resides in the cytoplasmic vesicle lumen. Its subcellular location is the cytoplasm. It is found in the lysosome. It catalyses the reaction adenosine + H2O + H(+) = inosine + NH4(+). The catalysed reaction is 2'-deoxyadenosine + H2O + H(+) = 2'-deoxyinosine + NH4(+). Functionally, catalyzes the hydrolytic deamination of adenosine and 2-deoxyadenosine. Plays an important role in purine metabolism and in adenosine homeostasis. Modulates signaling by extracellular adenosine, and so contributes indirectly to cellular signaling events. May act as a positive regulator of T-cell coactivation. The chain is Adenosine deaminase (ada) from Xenopus tropicalis (Western clawed frog).